The following is an 85-amino-acid chain: Small ribosomal subunit protein bS16 (85 aa).

This sequence belongs to the bacterial ribosomal protein bS16 family.

The sequence is that of Small ribosomal subunit protein bS16 from Pelobacter propionicus (strain DSM 2379 / NBRC 103807 / OttBd1).